The chain runs to 341 residues: NADH-quinone oxidoreductase subunit H (341 aa).

A run of 8 helical transmembrane segments spans residues 38–58 (PSVV…KLLV), 70–90 (ILFI…WAVI), 115–135 (IGVL…IVAG), 161–181 (MGLI…GEMV), 187–207 (MPFW…ISLL), 239–259 (LFFL…TIFF), 275–295 (IPGL…FVWT), and 314–334 (VFLP…LFTG).

The protein belongs to the complex I subunit 1 family. In terms of assembly, NDH-1 is composed of 14 different subunits. Subunits NuoA, H, J, K, L, M, N constitute the membrane sector of the complex.

It localises to the cell membrane. It carries out the reaction a quinone + NADH + 5 H(+)(in) = a quinol + NAD(+) + 4 H(+)(out). Functionally, NDH-1 shuttles electrons from NADH, via FMN and iron-sulfur (Fe-S) centers, to quinones in the respiratory chain. The immediate electron acceptor for the enzyme in this species is believed to be ubiquinone. Couples the redox reaction to proton translocation (for every two electrons transferred, four hydrogen ions are translocated across the cytoplasmic membrane), and thus conserves the redox energy in a proton gradient. This subunit may bind ubiquinone. In Wolbachia sp. subsp. Brugia malayi (strain TRS), this protein is NADH-quinone oxidoreductase subunit H.